Reading from the N-terminus, the 357-residue chain is DNA integrity scanning protein DisA (357 aa).

Positions 9-147 (DRKLLEILKT…DDIKYILRDS (139 aa)) constitute a DAC domain. ATP is bound by residues G76, L94, and 107-111 (TRHRT).

The protein belongs to the DisA family. As to quaternary structure, homooctamer. It depends on Mg(2+) as a cofactor.

It carries out the reaction 2 ATP = 3',3'-c-di-AMP + 2 diphosphate. Participates in a DNA-damage check-point that is active prior to asymmetric division when DNA is damaged. DisA forms globular foci that rapidly scan along the chromosomes during sporulation, searching for lesions. When a lesion is present, DisA pauses at the lesion site. This triggers a cellular response that culminates in a temporary block in sporulation initiation. Its function is as follows. Also has diadenylate cyclase activity, catalyzing the condensation of 2 ATP molecules into cyclic di-AMP (c-di-AMP). c-di-AMP acts as a signaling molecule that couples DNA integrity with progression of sporulation. The rise in c-di-AMP level generated by DisA while scanning the chromosome, operates as a positive signal that advances sporulation; upon encountering a lesion, the DisA focus arrests at the damaged site and halts c-di-AMP synthesis. The polypeptide is DNA integrity scanning protein DisA (Clostridium acetobutylicum (strain ATCC 824 / DSM 792 / JCM 1419 / IAM 19013 / LMG 5710 / NBRC 13948 / NRRL B-527 / VKM B-1787 / 2291 / W)).